The chain runs to 280 residues: uncharacterized protein (280 aa).

Disordered regions lie at residues 1-124 (MPRD…QREA) and 177-280 (LEEE…LSSK). Basic residues-rich tracts occupy residues 16-36 (SRRR…RSRR) and 48-83 (YSRR…RQKS). Composition is skewed to basic and acidic residues over residues 102-124 (AKNR…QREA) and 182-259 (EASL…ERLK).

This is an uncharacterized protein from Arabidopsis thaliana (Mouse-ear cress).